The primary structure comprises 4574 residues: E3 ubiquitin-protein ligase MYCBP2 (4574 aa).

2 disordered regions span residues 92 to 115 and 599 to 620; these read RGKK…VKTR and SASK…PYKP. 4 RCC1 repeats span residues 591-646, 690-746, 943-993, and 995-1051; these read DGSV…IVTK, SGEV…MMCQ, NGDV…VLLM, and GQVF…LRID. Residues 611–620 show a composition bias toward basic residues; it reads SRRQPKPYKP. A disulfide bridge connects residues Cys-1733 and Cys-1850. Disordered stretches follow at residues 1976–1998 and 2313–2332; these read APPT…EQGL and LQRL…LTFG. 2 stretches are compositionally biased toward polar residues: residues 1981-1998 and 2317-2328; these read NPNQ…EQGL and PGTSSNSATGTD. Residues 2336–2417 form a Filamin repeat; it reads APKLEATYEP…IHVTIDGIEI (82 aa). Disordered regions lie at residues 2613–2824, 2845–2922, 3085–3116, 3345–3365, and 3505–3526; these read GFDY…PSPH, SNDE…KQAM, SPGS…KAEV, PGSN…TDSD, and FETE…EQEK. Basic and acidic residues-rich tracts occupy residues 2639–2663 and 2678–2688; these read HRQE…KSKN and DTGKLRSDSHS. A compositionally biased stretch (polar residues) spans 2716-2729; that stretch reads NPGSRSSSPKQKTF. The segment covering 2730 to 2745 has biased composition (low complexity); that stretch reads TSGRSSPSSTSSPRSS. Basic and acidic residues-rich tracts occupy residues 2761-2772, 2854-2864, and 2874-2883; these read VHLDPPRERSKS, SELHNAEEGSS, and PVKEELESRS. Composition is skewed to basic residues over residues 2887-2900 and 3102-3111; these read VSRK…RPKK and KKTKKEKKKK. Basic and acidic residues predominate over residues 3515–3526; that stretch reads NKGNKENLEQEK. The 179-residue stretch at 3617-3795 folds into the DOC domain; it reads FNISVQSGYE…SVAQQKNCEA (179 aa). The disordered stretch occupies residues 3815–3841; sequence GDAEPTPEQEEKNLLSSPEGEDKAPSD. Zn(2+) is bound by residues Cys-4324, Cys-4327, Cys-4342, His-4344, His-4347, Cys-4350, Cys-4371, Cys-4374, Cys-4440, and Cys-4443. The RING-type; atypical zinc-finger motif lies at 4324–4375; that stretch reads CMICFTEALSAAPAIQLDCSHVFHLQCTRRVLENRWLGPRITFGFMSCPICK. The segment at 4435–4572 is tandem cysteine domain; it reads YAYYVCFKCK…LGCGVCRNAH (138 aa). Residue Cys-4454 is part of the active site. Positions 4471, 4474, 4483, 4486, 4495, 4498, and 4499 each coordinate Zn(2+). The active site involves Cys-4506. Zn(2+) contacts are provided by Cys-4513, Cys-4516, Cys-4534, Cys-4548, His-4554, Cys-4565, and Cys-4568.

This sequence belongs to the RING-Cys relay (RCR) family. In terms of tissue distribution, widely expressed when the visual system begins developing. In the eye, expressed in all cells, including retinal ganglion cells, with no obvious gradient.

It is found in the nucleus. It localises to the cell projection. The protein resides in the axon. Its subcellular location is the cytoplasm. The protein localises to the cytoskeleton. The enzyme catalyses [E2 ubiquitin-conjugating enzyme]-S-ubiquitinyl-L-cysteine + [acceptor protein]-L-threonine = [E2 ubiquitin-conjugating enzyme]-L-cysteine + [acceptor protein]-3-O-ubiquitinyl-L-threonine.. It participates in protein modification; protein ubiquitination. Atypical E3 ubiquitin-protein ligase which specifically mediates ubiquitination of threonine and serine residues on target proteins, instead of ubiquitinating lysine residues. Shows esterification activity towards both threonine and serine, with a preference for threonine, and acts via two essential catalytic cysteine residues that relay ubiquitin to its substrate via thioester intermediates. Interacts with the E2 enzymes UBE2D1, UBE2D3, UBE2E1 and UBE2L3. Plays a key role in neural development, probably by mediating ubiquitination of threonine residues on target proteins. Involved in different processes such as regulation of neurite outgrowth, synaptic growth, synaptogenesis and axon degeneration. Required in the visual system for correct fasciculation, targeting and mapping of retinal axons. Acts as a regulator of pteridine synthesis. May play a role in the regulation of the circadian clock gene expression. The sequence is that of E3 ubiquitin-protein ligase MYCBP2 from Danio rerio (Zebrafish).